Reading from the N-terminus, the 192-residue chain is Outer-membrane lipoprotein LolB (192 aa).

Positions 1-17 (MTYRTLCILAFTALISA) are cleaved as a signal peptide. Cys-18 carries the N-palmitoyl cysteine lipid modification. A lipid anchor (S-diacylglycerol cysteine) is attached at Cys-18.

This sequence belongs to the LolB family. As to quaternary structure, monomer.

The protein localises to the cell outer membrane. Functionally, plays a critical role in the incorporation of lipoproteins in the outer membrane after they are released by the LolA protein. The sequence is that of Outer-membrane lipoprotein LolB from Marinomonas sp. (strain MWYL1).